The following is a 95-amino-acid chain: Nodulin (95 aa).

The protein is Nodulin of Striga hermonthica (Purple witchweed).